Consider the following 336-residue polypeptide: Phospho-N-acetylmuramoyl-pentapeptide-transferase (336 aa).

The next 10 membrane-spanning stretches (helical) occupy residues 3 to 23 (LTLI…PYFI), 53 to 73 (GGTV…LFSI), 78 to 98 (SLAL…IGFL), 118 to 138 (LALQ…PSGI), 143 to 163 (VFGY…FWVV), 174 to 194 (GIDG…GVIA), 200 to 220 (FDVL…FCFN), 226 to 246 (VFMG…ISIA), 254 to 274 (LIIG…VFYF), and 316 to 336 (AFLW…LYVF).

It belongs to the glycosyltransferase 4 family. MraY subfamily. Mg(2+) serves as cofactor.

It is found in the cell membrane. It carries out the reaction UDP-N-acetyl-alpha-D-muramoyl-L-alanyl-gamma-D-glutamyl-L-lysyl-D-alanyl-D-alanine + di-trans,octa-cis-undecaprenyl phosphate = Mur2Ac(oyl-L-Ala-gamma-D-Glu-L-Lys-D-Ala-D-Ala)-di-trans,octa-cis-undecaprenyl diphosphate + UMP. The protein operates within cell wall biogenesis; peptidoglycan biosynthesis. Catalyzes the initial step of the lipid cycle reactions in the biosynthesis of the cell wall peptidoglycan: transfers peptidoglycan precursor phospho-MurNAc-pentapeptide from UDP-MurNAc-pentapeptide onto the lipid carrier undecaprenyl phosphate, yielding undecaprenyl-pyrophosphoryl-MurNAc-pentapeptide, known as lipid I. In Streptococcus pyogenes serotype M18 (strain MGAS8232), this protein is Phospho-N-acetylmuramoyl-pentapeptide-transferase.